A 95-amino-acid polypeptide reads, in one-letter code: Co-chaperonin GroES (95 aa).

Belongs to the GroES chaperonin family. In terms of assembly, heptamer of 7 subunits arranged in a ring. Interacts with the chaperonin GroEL.

It is found in the cytoplasm. Functionally, together with the chaperonin GroEL, plays an essential role in assisting protein folding. The GroEL-GroES system forms a nano-cage that allows encapsulation of the non-native substrate proteins and provides a physical environment optimized to promote and accelerate protein folding. GroES binds to the apical surface of the GroEL ring, thereby capping the opening of the GroEL channel. This chain is Co-chaperonin GroES, found in Francisella tularensis subsp. holarctica (strain FTNF002-00 / FTA).